A 460-amino-acid chain; its full sequence is V-type ATP synthase beta chain (460 aa).

Belongs to the ATPase alpha/beta chains family.

Its function is as follows. Produces ATP from ADP in the presence of a proton gradient across the membrane. The V-type beta chain is a regulatory subunit. The chain is V-type ATP synthase beta chain from Dictyoglomus turgidum (strain DSM 6724 / Z-1310).